Reading from the N-terminus, the 219-residue chain is Transmembrane protein 17A (219 aa).

Asn18 and Asn27 each carry an N-linked (GlcNAc...) asparagine glycan. 4 consecutive transmembrane segments (helical) span residues 56-76 (MMLY…LLML), 83-103 (LPVY…IFEV), 121-141 (LAGF…FFIT), and 153-173 (AVHS…FLAL).

This sequence belongs to the TMEM17 family. As to quaternary structure, part of the tectonic-like complex (also named B9 complex).

It localises to the cell projection. The protein resides in the cilium membrane. In terms of biological role, transmembrane component of the tectonic-like complex, a complex localized at the transition zone of primary cilia and acting as a barrier that prevents diffusion of transmembrane proteins between the cilia and plasma membranes. Required for ciliogenesis and sonic hedgehog/SHH signaling. The chain is Transmembrane protein 17A (tmem17a) from Danio rerio (Zebrafish).